We begin with the raw amino-acid sequence, 489 residues long: Cobyric acid synthase (489 aa).

Residues 247–439 (ALKVVVPVLP…IHGVFDEPAA (193 aa)) form the GATase cobBQ-type domain. Cys328 serves as the catalytic Nucleophile. His431 is a catalytic residue.

This sequence belongs to the CobB/CobQ family. CobQ subfamily.

It functions in the pathway cofactor biosynthesis; adenosylcobalamin biosynthesis. Its function is as follows. Catalyzes amidations at positions B, D, E, and G on adenosylcobyrinic A,C-diamide. NH(2) groups are provided by glutamine, and one molecule of ATP is hydrogenolyzed for each amidation. The protein is Cobyric acid synthase of Marinobacter nauticus (strain ATCC 700491 / DSM 11845 / VT8) (Marinobacter aquaeolei).